Here is a 313-residue protein sequence, read N- to C-terminus: Ribosomal RNA small subunit methyltransferase H (313 aa).

S-adenosyl-L-methionine is bound by residues 35-37 (GGH), D55, F79, D100, and Q107.

This sequence belongs to the methyltransferase superfamily. RsmH family.

The protein resides in the cytoplasm. It catalyses the reaction cytidine(1402) in 16S rRNA + S-adenosyl-L-methionine = N(4)-methylcytidine(1402) in 16S rRNA + S-adenosyl-L-homocysteine + H(+). Functionally, specifically methylates the N4 position of cytidine in position 1402 (C1402) of 16S rRNA. The sequence is that of Ribosomal RNA small subunit methyltransferase H from Burkholderia pseudomallei (strain 1106a).